Reading from the N-terminus, the 246-residue chain is Apolipoprotein L domain-containing protein 1 (246 aa).

Transmembrane regions (helical) follow at residues 50–72 and 89–109; these read SLAA…IVGL and GLGV…SLIF. Positions 193-220 form a coiled coil; sequence LKAKIQKLSESLESCTGALDELSEQLES.

This sequence belongs to the apolipoprotein L family. As to expression, present at low levels in brain vascular cells (at protein level).

The protein resides in the cell membrane. Its subcellular location is the cell junction. The protein localises to the cytoplasmic vesicle. It localises to the secretory vesicle. Its function is as follows. Is a modulator of endothelial barrier permeability, required for proper organization of endothelial cell-cell junctions and cytoskeleton. It also plays a role in the modulation of secretory autophagy. May affect blood-brain barrier permeability. The protein is Apolipoprotein L domain-containing protein 1 (Apold1) of Rattus norvegicus (Rat).